Consider the following 542-residue polypeptide: Malolactic enzyme (542 aa).

Tyrosine 92 serves as the catalytic Proton donor. Catalysis depends on lysine 165, which acts as the Proton acceptor. Lysine 165 contacts substrate. The Mn(2+) site is built by glutamate 236, aspartate 237, and aspartate 260. Residues 293–296 (AGTA), asparagine 405, and asparagine 450 each bind NAD(+). Asparagine 450 contacts substrate.

It belongs to the malic enzymes family. In terms of assembly, homodimer. Mn(2+) is required as a cofactor. NAD(+) serves as cofactor.

The catalysed reaction is (S)-malate + H(+) = (S)-lactate + CO2. Oxamate, fructose-1,6-diphosphate and L-lactate act as non-competitive inhibitors, whereas succinate, citrate and tartrate isomers produce a competitive inhibition. Its function is as follows. Involved in the malolactic fermentation (MLF) of wine, which results in a natural decrease in acidity and favorable changes in wine flavors. Catalyzes the decarboxylation of L-malate to L-lactate. This chain is Malolactic enzyme (mleS), found in Leuconostoc mesenteroides.